The following is a 466-amino-acid chain: Ribosomal protein uS12 methylthiotransferase RimO (466 aa).

Residues 31-141 form the MTTase N-terminal domain; it reads PTIGMVSLGC…VLDAVHGAVP (111 aa). Positions 40, 76, 105, 172, 176, and 179 each coordinate [4Fe-4S] cluster. In terms of domain architecture, Radical SAM core spans 158–397; it reads LTPRHYSYLK…MAKAQAISEA (240 aa). In terms of domain architecture, TRAM spans 400–466; that stretch reads AARVGQVIEV…GEYDLWGRLR (67 aa).

Belongs to the methylthiotransferase family. RimO subfamily. It depends on [4Fe-4S] cluster as a cofactor.

The protein localises to the cytoplasm. It carries out the reaction L-aspartate(89)-[ribosomal protein uS12]-hydrogen + (sulfur carrier)-SH + AH2 + 2 S-adenosyl-L-methionine = 3-methylsulfanyl-L-aspartate(89)-[ribosomal protein uS12]-hydrogen + (sulfur carrier)-H + 5'-deoxyadenosine + L-methionine + A + S-adenosyl-L-homocysteine + 2 H(+). Its function is as follows. Catalyzes the methylthiolation of an aspartic acid residue of ribosomal protein uS12. This Ruegeria pomeroyi (strain ATCC 700808 / DSM 15171 / DSS-3) (Silicibacter pomeroyi) protein is Ribosomal protein uS12 methylthiotransferase RimO.